A 475-amino-acid chain; its full sequence is ATP synthase subunit beta (475 aa).

Position 152–159 (152–159) interacts with ATP; sequence GGAGVGKT.

Belongs to the ATPase alpha/beta chains family. In terms of assembly, F-type ATPases have 2 components, CF(1) - the catalytic core - and CF(0) - the membrane proton channel. CF(1) has five subunits: alpha(3), beta(3), gamma(1), delta(1), epsilon(1). CF(0) has three main subunits: a(1), b(2) and c(9-12). The alpha and beta chains form an alternating ring which encloses part of the gamma chain. CF(1) is attached to CF(0) by a central stalk formed by the gamma and epsilon chains, while a peripheral stalk is formed by the delta and b chains.

It localises to the cell inner membrane. The enzyme catalyses ATP + H2O + 4 H(+)(in) = ADP + phosphate + 5 H(+)(out). In terms of biological role, produces ATP from ADP in the presence of a proton gradient across the membrane. The catalytic sites are hosted primarily by the beta subunits. This chain is ATP synthase subunit beta, found in Wolbachia sp. subsp. Drosophila simulans (strain wRi).